Reading from the N-terminus, the 278-residue chain is 3-methyl-2-oxobutanoate hydroxymethyltransferase (278 aa).

Mg(2+) is bound by residues Asp-43 and Asp-82. Residues 43 to 44 (DS), Asp-82, and Lys-112 contribute to the 3-methyl-2-oxobutanoate site. Glu-114 provides a ligand contact to Mg(2+). Glu-181 (proton acceptor) is an active-site residue.

The protein belongs to the PanB family. In terms of assembly, homodecamer; pentamer of dimers. It depends on Mg(2+) as a cofactor.

The protein resides in the cytoplasm. It carries out the reaction 3-methyl-2-oxobutanoate + (6R)-5,10-methylene-5,6,7,8-tetrahydrofolate + H2O = 2-dehydropantoate + (6S)-5,6,7,8-tetrahydrofolate. Its pathway is cofactor biosynthesis; (R)-pantothenate biosynthesis; (R)-pantoate from 3-methyl-2-oxobutanoate: step 1/2. In terms of biological role, catalyzes the reversible reaction in which hydroxymethyl group from 5,10-methylenetetrahydrofolate is transferred onto alpha-ketoisovalerate to form ketopantoate. The chain is 3-methyl-2-oxobutanoate hydroxymethyltransferase from Desulfitobacterium hafniense (strain DSM 10664 / DCB-2).